The primary structure comprises 401 residues: Argininosuccinate synthase (401 aa).

Residues 10-18 (AYSGGVDTS) and Ala38 contribute to the ATP site. Tyr89 contributes to the L-citrulline binding site. Gly119 serves as a coordination point for ATP. The L-aspartate site is built by Thr121, Asn125, and Asp126. Asn125 provides a ligand contact to L-citrulline. L-citrulline-binding residues include Arg129, Ser177, Ser186, Glu262, and Tyr274.

The protein belongs to the argininosuccinate synthase family. Type 1 subfamily. In terms of assembly, homotetramer.

The protein resides in the cytoplasm. It catalyses the reaction L-citrulline + L-aspartate + ATP = 2-(N(omega)-L-arginino)succinate + AMP + diphosphate + H(+). The protein operates within amino-acid biosynthesis; L-arginine biosynthesis; L-arginine from L-ornithine and carbamoyl phosphate: step 2/3. In Prochlorococcus marinus (strain MIT 9303), this protein is Argininosuccinate synthase.